Consider the following 282-residue polypeptide: Transcription repressor MYB4 (282 aa).

2 consecutive HTH myb-type domains span residues 9–61 and 62–116; these read KAHT…INYL and RPDL…RRKL. 2 DNA-binding regions (H-T-H motif) span residues 37-61 and 89-112; these read WRSL…INYL and WSLI…NTHI. The segment at 119–145 is disordered; it reads RGIDPTSHRPIQESSASQDSKPTQLEP. Positions 130–145 are enriched in polar residues; sequence QESSASQDSKPTQLEP.

In terms of assembly, interacts with BHLH12/MYC1 and BHLH42/TT8. Interacts with SAD2. Widely expressed at low level. Highly expressed in siliques. Weakly expressed in seedlings, young and mature leaves, cauline leaves, stems, flower buds and roots.

The protein resides in the nucleus. Functionally, transcription repressor involved in regulation of protection against UV. Mediates transcriptional repression of CYP73A5, the gene encoding trans-cinnamate 4-monooxygenase, thereby regulating the accumulation of the UV-protectant compound sinapoylmalate. This Arabidopsis thaliana (Mouse-ear cress) protein is Transcription repressor MYB4 (MYB4).